We begin with the raw amino-acid sequence, 102 residues long: Protein PAPPAS (102 aa).

2 helical membrane passes run 13–33 (LFLT…FVKW) and 82–102 (IGSD…FFFF).

As to expression, expressed in placenta with lower expression in brain, kidney and testis.

Its subcellular location is the endoplasmic reticulum membrane. This Homo sapiens (Human) protein is Protein PAPPAS (PAPPA-AS1).